A 317-amino-acid chain; its full sequence is Zinc metalloproteinase/disintegrin (317 aa).

The propeptide occupies 1–26 (EAPKMCGVTQNWESYEPIKKASQSNL). A Peptidase M12B domain is found at 32–228 (RYIELVIVAD…QKPQCILNKP (197 aa)). The Ca(2+) site is built by glutamate 35 and aspartate 119. Intrachain disulfides connect cysteine 143–cysteine 223, cysteine 183–cysteine 207, and cysteine 185–cysteine 190. Residue histidine 168 participates in Zn(2+) binding. Residue glutamate 169 is part of the active site. Zn(2+) is bound by residues histidine 172 and histidine 178. 2 residues coordinate Ca(2+): cysteine 223 and asparagine 226. The propeptide occupies 229-244 (LRTDTVSTPVSGNELL). One can recognise a Disintegrin domain in the interval 236–317 (TPVSGNELLE…AGCPRNPFHA (82 aa)). 6 disulfide bridges follow: cysteine 250–cysteine 259, cysteine 252–cysteine 260, cysteine 265–cysteine 279, cysteine 273–cysteine 303, cysteine 278–cysteine 282, and cysteine 291–cysteine 310. The Cell attachment site signature appears at 295-297 (RGD).

This sequence belongs to the venom metalloproteinase (M12B) family. P-II subfamily. P-IIa sub-subfamily. Monomer. The cofactor is Zn(2+). Expressed by the venom gland.

The protein resides in the secreted. Metalloproteinase that impairs hemostasis in the envenomed animal. Its function is as follows. Inhibits GPIIb/GPIIIa (ITGA2B/ITGB3) binding to immobilized fibrinogen with an IC(50) of 2.2 nM and ADP-induced platelet aggregation with an IC(50) of 131 nM, respectively. Inhibits angiogenesis. By binding to vitronectin receptor (alpha-V/beta-3 (ITGAV/ITGB3)), also induces apoptosis of endothelial cells by blocking their attachment to extracellular matrix proteins. In terms of biological role, inhibits platelet aggregation induced by ADP (IC(50) is 30 nM), collagen (IC(50) is 500 nM), thrombin and epinephrin (IC(50) is 160 nM). The protein is Zinc metalloproteinase/disintegrin of Gloydius brevicauda (Korean slamosa snake).